Here is a 235-residue protein sequence, read N- to C-terminus: Segregation and condensation protein A (235 aa).

Belongs to the ScpA family. As to quaternary structure, component of a cohesin-like complex composed of ScpA, ScpB and the Smc homodimer, in which ScpA and ScpB bind to the head domain of Smc. The presence of the three proteins is required for the association of the complex with DNA.

The protein resides in the cytoplasm. Its function is as follows. Participates in chromosomal partition during cell division. May act via the formation of a condensin-like complex containing Smc and ScpB that pull DNA away from mid-cell into both cell halves. The sequence is that of Segregation and condensation protein A from Streptococcus equi subsp. zooepidemicus (strain MGCS10565).